Here is a 101-residue protein sequence, read N- to C-terminus: Enhancer of yellow 2 transcription factor (101 aa).

The protein belongs to the ENY2 family. In terms of assembly, component of the nuclear pore complex (NPC)-associated AMEX complex (anchoring and mRNA export complex), composed of at least e(y)2 and xmas-2. Component of the SAGA transcription coactivator-HAT complexes, at least composed of Ada2b, e(y)2, Pcaf/Gcn5, Taf10 and Nipped-A/Trrap. Within the SAGA complex, e(y)2, Sgf11, and not/nonstop form an additional subcomplex of SAGA called the DUB module (deubiquitination module). Component of the THO complex, composed of at least e(y)2, HPR1, THO2, THOC5, THOC6 and THOC7. Interacts with e(y)1. Interacts with su(Hw) (via zinc fingers). Interacts with xmas-2; required for localization to the nuclear periphery. Interacts with the nuclear pore complex (NPC).

It is found in the nucleus. It localises to the nucleoplasm. The protein resides in the cytoplasm. Functionally, involved in mRNA export coupled transcription activation by association with both the AMEX and the SAGA complexes. The SAGA complex is a multiprotein complex that activates transcription by remodeling chromatin and mediating histone acetylation and deubiquitination. Within the SAGA complex, participates in a subcomplex that specifically deubiquitinates histone H2B. The SAGA complex is recruited to specific gene promoters by activators, where it is required for transcription. Required for nuclear receptor-mediated transactivation. Involved in transcription elongation by recruiting the THO complex onto nascent mRNA. The AMEX complex functions in docking export-competent ribonucleoprotein particles (mRNPs) to the nuclear entrance of the nuclear pore complex (nuclear basket). AMEX participates in mRNA export and accurate chromatin positioning in the nucleus by tethering genes to the nuclear periphery. The sequence is that of Enhancer of yellow 2 transcription factor from Drosophila erecta (Fruit fly).